A 145-amino-acid polypeptide reads, in one-letter code: D-aminoacyl-tRNA deacylase (145 aa).

The short motif at 137–138 (GP) is the Gly-cisPro motif, important for rejection of L-amino acids element.

The protein belongs to the DTD family. As to quaternary structure, homodimer.

The protein localises to the cytoplasm. It carries out the reaction glycyl-tRNA(Ala) + H2O = tRNA(Ala) + glycine + H(+). It catalyses the reaction a D-aminoacyl-tRNA + H2O = a tRNA + a D-alpha-amino acid + H(+). Its function is as follows. An aminoacyl-tRNA editing enzyme that deacylates mischarged D-aminoacyl-tRNAs. Also deacylates mischarged glycyl-tRNA(Ala), protecting cells against glycine mischarging by AlaRS. Acts via tRNA-based rather than protein-based catalysis; rejects L-amino acids rather than detecting D-amino acids in the active site. By recycling D-aminoacyl-tRNA to D-amino acids and free tRNA molecules, this enzyme counteracts the toxicity associated with the formation of D-aminoacyl-tRNA entities in vivo and helps enforce protein L-homochirality. The chain is D-aminoacyl-tRNA deacylase from Pseudomonas entomophila (strain L48).